The following is a 288-amino-acid chain: Peroxisomal protein PEX21 (288 aa).

Cysteine 5 is covalently cross-linked (Glycyl cysteine thioester (Cys-Gly) (interchain with G-Cter in ubiquitin)).

Belongs to the peroxin-21 family. As to quaternary structure, interacts with PEX7. Interacts with PEX13. Interacts with SES1. Post-translationally, monoubiquitinated at Cys-5; acts as a signal for PEX21 extraction and is required for proper export from peroxisomes and recycling.

Its subcellular location is the cytoplasm. It localises to the cytosol. It is found in the peroxisome. Functionally, receptor that mediates peroxisomal import of proteins containing a C-terminal PTS2-type peroxisomal targeting signal via its interaction with PEX7. Interaction with PEX7 only takes place when PEX7 is associated with cargo proteins containing a PTS2 peroxisomal targeting signal. PEX7 along with PTS2-containing cargo proteins are then translocated through the PEX13-PEX14 docking complex together with PEX21. Acts as an activator of the seryl-tRNA synthetase SES1 by increasing its binding to tRNA. The polypeptide is Peroxisomal protein PEX21 (PEX21) (Saccharomyces cerevisiae (strain ATCC 204508 / S288c) (Baker's yeast)).